A 64-amino-acid polypeptide reads, in one-letter code: Large ribosomal subunit protein bL35 (64 aa).

Composition is skewed to basic residues over residues 1–15 (MPKNKTHSGASKRFK) and 27–42 (AGKRHLLEHKSSKKTR). Residues 1–45 (MPKNKTHSGASKRFKITGSGKVLRERAGKRHLLEHKSSKKTRSLT) are disordered.

Belongs to the bacterial ribosomal protein bL35 family.

In Streptomyces griseus subsp. griseus (strain JCM 4626 / CBS 651.72 / NBRC 13350 / KCC S-0626 / ISP 5235), this protein is Large ribosomal subunit protein bL35.